The chain runs to 312 residues: Nucleosome assembly protein 1-like 4 (312 aa).

The stretch at 24-78 forms a coiled coil; the sequence is VETLKNKLQALAEQHVDVLESLAPSVRKRVDVLMEIQSQHDELEVKFFEEKAALE. The Nuclear export signal signature appears at 45 to 60; it reads LAPSVRKRVDVLMEIQ. A disordered region spans residues 288 to 312; it reads EDYGASWVDDEEEDDNDDEYSDEEA.

This sequence belongs to the nucleosome assembly protein (NAP) family.

Its subcellular location is the nucleus. It is found in the cytoplasm. Its function is as follows. May modulate chromatin structure by regulation of nucleosome assembly/disassembly. The protein is Nucleosome assembly protein 1-like 4 of Oryza sativa subsp. indica (Rice).